The following is a 248-amino-acid chain: Trypsin II-P29 (248 aa).

The N-terminal stretch at 1–16 is a signal peptide; it reads MKFLFLILSCLGAAVA. A propeptide spans 17–25 (activation peptide); that stretch reads FPGGADDDK. One can recognise a Peptidase S1 domain in the interval 26–246; it reads IVGGYTCPEH…YVDWIQETIA (221 aa). 6 disulfides stabilise this stretch: C32/C162, C50/C66, C134/C235, C141/C208, C173/C187, and C198/C222. Residue H65 is the Charge relay system of the active site. Residues E77, N79, V82, and E87 each coordinate Ca(2+). D109 functions as the Charge relay system in the catalytic mechanism. The active-site Charge relay system is S202.

The protein belongs to the peptidase S1 family. Ca(2+) is required as a cofactor. In terms of tissue distribution, high levels are seen in the pancreas while lower levels are found in the liver, spleen and thymus.

The protein localises to the secreted. It is found in the extracellular space. It carries out the reaction Preferential cleavage: Arg-|-Xaa, Lys-|-Xaa.. This chain is Trypsin II-P29, found in Gallus gallus (Chicken).